Here is a 370-residue protein sequence, read N- to C-terminus: Peptide chain release factor 1 (370 aa).

N5-methylglutamine is present on Q237. Residues 286–296 (ERQRSARDATR) show a composition bias toward basic and acidic residues. Positions 286 to 310 (ERQRSARDATRKSQVGTGDRSEKIR) are disordered.

Belongs to the prokaryotic/mitochondrial release factor family. Post-translationally, methylated by PrmC. Methylation increases the termination efficiency of RF1.

It is found in the cytoplasm. In terms of biological role, peptide chain release factor 1 directs the termination of translation in response to the peptide chain termination codons UAG and UAA. This chain is Peptide chain release factor 1, found in Anaeromyxobacter dehalogenans (strain 2CP-C).